The sequence spans 62 residues: Insect toxin BsIT4 (62 aa).

In terms of domain architecture, LCN-type CS-alpha/beta spans 1-62; it reads DGYIKGNKGC…WLYAATNTCG (62 aa). 4 disulfides stabilise this stretch: Cys-10/Cys-61, Cys-14/Cys-35, Cys-21/Cys-42, and Cys-25/Cys-44.

It belongs to the long (4 C-C) scorpion toxin superfamily. Sodium channel inhibitor family. Beta subfamily. In terms of tissue distribution, expressed by the venom gland.

It is found in the secreted. In terms of biological role, depressant insect beta-toxins cause a transient contraction paralysis followed by a slow flaccid paralysis. They bind voltage-independently at site-4 of sodium channels (Nav) and shift the voltage of activation toward more negative potentials thereby affecting sodium channel activation and promoting spontaneous and repetitive firing. This toxin is active only on insects. In Hottentotta tamulus sindicus (Scorpion), this protein is Insect toxin BsIT4.